The primary structure comprises 193 residues: Large ribosomal subunit protein uL5 (193 aa).

Belongs to the universal ribosomal protein uL5 family. In terms of assembly, part of the 50S ribosomal subunit; part of the 5S rRNA/L5/L18/L25 subcomplex. Contacts the 5S rRNA and the P site tRNA. Forms a bridge to the 30S subunit in the 70S ribosome.

This is one of the proteins that bind and probably mediate the attachment of the 5S RNA into the large ribosomal subunit, where it forms part of the central protuberance. In the 70S ribosome it contacts protein S13 of the 30S subunit (bridge B1b), connecting the 2 subunits; this bridge is implicated in subunit movement. Contacts the P site tRNA; the 5S rRNA and some of its associated proteins might help stabilize positioning of ribosome-bound tRNAs. The polypeptide is Large ribosomal subunit protein uL5 (Novosphingobium aromaticivorans (strain ATCC 700278 / DSM 12444 / CCUG 56034 / CIP 105152 / NBRC 16084 / F199)).